A 401-amino-acid chain; its full sequence is Mitochondrial distribution and morphology protein 12 (401 aa).

Residues 1–401 form the SMP-LTD domain; the sequence is MSIDINWDTL…VYPSFWTFLV (401 aa). Residues 70–88 show a composition bias toward acidic residues; the sequence is YEEDEDYPDNEDDDDDEAG. Disordered regions lie at residues 70–95 and 190–247; these read YEEDEDYPDNEDDDDDEAGLDSNPRN and SLTL…EKSP. Residues 195 to 205 show a composition bias toward low complexity; sequence PQSHPDPSSRP. The span at 209 to 220 shows a compositional bias: basic and acidic residues; sequence HQHDDERRRSLA.

Belongs to the MDM12 family. Component of the ER-mitochondria encounter structure (ERMES) or MDM complex, composed of MMM1, MDM10, MDM12 and MDM34. An MMM1 homodimer associates with one molecule of MDM12 on each side in a pairwise head-to-tail manner, and the SMP-LTD domains of MMM1 and MDM12 generate a continuous hydrophobic tunnel for phospholipid trafficking.

It is found in the mitochondrion outer membrane. The protein localises to the endoplasmic reticulum membrane. Component of the ERMES/MDM complex, which serves as a molecular tether to connect the endoplasmic reticulum (ER) and mitochondria. Components of this complex are involved in the control of mitochondrial shape and protein biogenesis, and function in nonvesicular lipid trafficking between the ER and mitochondria. MDM12 is required for the interaction of the ER-resident membrane protein MMM1 and the outer mitochondrial membrane-resident beta-barrel protein MDM10. The MDM12-MMM1 subcomplex functions in the major beta-barrel assembly pathway that is responsible for biogenesis of all mitochondrial outer membrane beta-barrel proteins, and acts in a late step after the SAM complex. The MDM10-MDM12-MMM1 subcomplex further acts in the TOM40-specific pathway after the action of the MDM12-MMM1 complex. Essential for establishing and maintaining the structure of mitochondria and maintenance of mtDNA nucleoids. The protein is Mitochondrial distribution and morphology protein 12 of Phaeosphaeria nodorum (strain SN15 / ATCC MYA-4574 / FGSC 10173) (Glume blotch fungus).